The following is a 538-amino-acid chain: Coiled-coil domain-containing protein 8 (538 aa).

Residues 58–128 form a disordered region; the sequence is IMEKSTPHPP…QGPRRGKKVR (71 aa). The span at 119–128 shows a compositional bias: basic residues; it reads QGPRRGKKVR. A phosphoserine mark is found at serine 142, serine 146, and serine 261. The tract at residues 213–473 is disordered; the sequence is WAPRAGPGVG…GTAPGARARK (261 aa). The segment covering 301–313 has biased composition (basic and acidic residues); it reads DSQREEAIADQRE. A compositionally biased stretch (low complexity) spans 321–332; sequence AGAPADQGAEAA. Residues 349-366 adopt a coiled-coil conformation; the sequence is AEEGAEAADNQREEAADN. Basic and acidic residues-rich tracts occupy residues 357–373, 381–392, and 405–419; these read DNQREEAADNQRAEAPA, DNHREEAADNQR, and DNQREEAVHDQRERA. 2 stretches are compositionally biased toward low complexity: residues 428-438 and 458-469; these read QRAQARAGQRA and AAQGTTGTAPGA. The PxLPxI/L motif; mediates interaction with ANKRA2 motif lies at 500-506; sequence PRLPTLP. The stretch at 514–535 forms a coiled coil; the sequence is EARNLRVLRAEARAEAEQGEQE.

In terms of assembly, component of the 3M complex, composed of core components CUL7, CCDC8 and OBSL1. Interacts (via PxLPxI/L motif) with ANKRA2 (via ankyrin repeats); may link the 3M complex to histone deacetylases including HDAC4 and HDAC5. Widely expressed with low levels in spleen, skeletal muscle, small intestine, kidney and liver.

It is found in the cytoplasm. The protein resides in the cytoskeleton. Its subcellular location is the microtubule organizing center. It localises to the centrosome. In terms of biological role, core component of the 3M complex, a complex required to regulate microtubule dynamics and genome integrity. It is unclear how the 3M complex regulates microtubules, it could act by controlling the level of a microtubule stabilizer. Required for localization of CUL7 to the centrosome. This Homo sapiens (Human) protein is Coiled-coil domain-containing protein 8 (CCDC8).